A 100-amino-acid chain; its full sequence is uncharacterized protein (100 aa).

The span at 65–91 (DDRERHLSATGERRREQGFGTSRRKDP) shows a compositional bias: basic and acidic residues. The interval 65–100 (DDRERHLSATGERRREQGFGTSRRKDPSLYNWSDVK) is disordered.

It belongs to the chlamydial CPn_0121/CT_031/TC_0300 family.

This is an uncharacterized protein from Chlamydia trachomatis serovar D (strain ATCC VR-885 / DSM 19411 / UW-3/Cx).